The following is a 181-amino-acid chain: DNA-packaging protein NU1 homolog (181 aa).

It to phage lambda DNA packaging protein NU1.

The sequence is that of DNA-packaging protein NU1 homolog (nohD) from Escherichia coli (strain K12).